The following is a 638-amino-acid chain: Intron-encoded RNA maturase bI4 (638 aa).

The segment at 1–253 (MAFRKSNVYL…VFYSPNTLGQ (253 aa)) is COB exons 1 to 4 encoded. The segment at 253–638 (QNMALLLITY…LKFNEKWNNN (386 aa)) is COB intron 4 encoded.

This sequence in the C-terminal section; belongs to the LAGLIDADG endonuclease family. As to quaternary structure, forms a ternary complex with intron derived RNA and the imported mitochondrial leucyl-tRNA synthetase NAM2. The proteins do not interact directly with each other. Post-translationally, the mature protein may arise from proteolytic cleavage of an in-frame translation of COB exons 1 to 4 plus intron 4, containing the bI4 open reading frame. Cleavage would take place close to the Met-385 resulting in an active maturase of about 30 kDa.

Its subcellular location is the mitochondrion. Its function is as follows. Mitochondrial mRNA maturase required for splicing of intron 4 of the cytochrome b (COB) gene, containing its own coding sequence, and intron 4 in COX1, coding for the related homing endonuclease aI4. In vivo splicing requires in addition the imported mitochondrial leucyl-tRNA synthetase NAM2. Both proteins seem to stimulate the intrinsic ribozyme activity of intron bI4 through binding to and stabilizing specific secondary and tertiary structure elements in the RNA. The chain is Intron-encoded RNA maturase bI4 (BI4) from Saccharomyces cerevisiae (strain ATCC 204508 / S288c) (Baker's yeast).